Consider the following 561-residue polypeptide: Zinc finger protein with KRAB and SCAN domains 1 (561 aa).

A disordered region spans residues 1-51 (MMTAESRETTGLSPQAAQEKDGIVIVKVEEEDEEDHMWGQDSSLQETPPPD). Position 13 is a phosphoserine (Ser13). Lys27 is covalently cross-linked (Glycyl lysine isopeptide (Lys-Gly) (interchain with G-Cter in SUMO2)). Residues 56–138 (RQRFRRFCYQ…TLLEDLELDL (83 aa)) form the SCAN box domain. Residues 163-187 (VQESSSFDHHETAQSHFKHSSRKPR) form a disordered region. The span at 178 to 187 (HFKHSSRKPR) shows a compositional bias: basic residues. Residues Lys180 and Lys226 each participate in a glycyl lysine isopeptide (Lys-Gly) (interchain with G-Cter in SUMO2) cross-link. The KRAB domain maps to 225–304 (VKIEDMAVSL…QKEFGEKREQ (80 aa)). Residues 260–275 (NVFSQGSENRNGNEST) are compositionally biased toward polar residues. The segment at 260–372 (NVFSQGSENR…NTPEEAPSGA (113 aa)) is disordered. Composition is skewed to basic and acidic residues over residues 276–286 (SKAEVKEDSTS) and 294–349 (FQKE…EKGK). Residues Lys277, Lys296, Lys301, and Lys336 each participate in a glycyl lysine isopeptide (Lys-Gly) (interchain with G-Cter in SUMO2) cross-link. The segment covering 355–365 (FSLSANFNNTP) has biased composition (polar residues). A Glycyl lysine isopeptide (Lys-Gly) (interchain with G-Cter in SUMO2) cross-link involves residue Lys373. 6 C2H2-type zinc fingers span residues 375–397 (HRCD…KIIH), 403–425 (YECN…QRIH), 431–453 (HECN…QRIH), 459–481 (YECN…QRIH), 487–509 (YECS…RRIH), and 515–537 (YKCT…HRIH). Glycyl lysine isopeptide (Lys-Gly) (interchain with G-Cter in SUMO2) cross-links involve residues Lys410, Lys438, and Lys476. Lys558 is covalently cross-linked (Glycyl lysine isopeptide (Lys-Gly) (interchain with G-Cter in SUMO2)).

The protein belongs to the krueppel C2H2-type zinc-finger protein family.

It localises to the nucleus. May be involved in transcriptional regulation. The polypeptide is Zinc finger protein with KRAB and SCAN domains 1 (Zkscan1) (Mus musculus (Mouse)).